The chain runs to 1088 residues: RNA-directed RNA polymerase (1088 aa).

The RdRp catalytic domain occupies 501–687; that stretch reads LSYGDVTRFL…AKRYIAGGKI (187 aa).

Belongs to the reoviridae RNA-directed RNA polymerase family. As to quaternary structure, interacts with VP3 (Potential). Interacts with VP2; this interaction activates VP1. Interacts with NSP5; this interaction is probably necessary for the formation of functional virus factories. Interacts with NSP2; this interaction is weak. Mg(2+) serves as cofactor.

The protein localises to the virion. It catalyses the reaction RNA(n) + a ribonucleoside 5'-triphosphate = RNA(n+1) + diphosphate. In terms of biological role, RNA-directed RNA polymerase that is involved in both transcription and genome replication. Together with VP3 capping enzyme, forms an enzyme complex positioned near the channels situated at each of the five-fold vertices of the core. Following infection, the outermost layer of the virus is lost, leaving a double-layered particle (DLP) made up of the core and VP6 shell. VP1 then catalyzes the transcription of fully conservative plus-strand genomic RNAs that are extruded through the DLP's channels into the cytoplasm where they function as mRNAs for translation of viral proteins. One copy of each of the viral (+)RNAs is also recruited during core assembly, together with newly synthesized polymerase complexes and VP2. The polymerase of these novo-formed particles catalyzes the synthesis of complementary minus-strands leading to dsRNA formation. To do so, the polymerase specifically recognizes and binds 4 bases 5'-UGUG-3' in the conserved 3'-sequence of plus-strand RNA templates. VP2 presumably activates the autoinhibited VP1-RNA complex to coordinate packaging and genome replication. Once dsRNA synthesis is complete, the polymerase switches to the transcriptional mode, thus providing secondary transcription. The sequence is that of RNA-directed RNA polymerase from Macaca mulatta (Rhesus macaque).